The primary structure comprises 336 residues: Protein REVEILLE 7-like (336 aa).

The region spanning 60–114 is the HTH myb-type domain; the sequence is TVTKQREKWSEEEHDRFLEAIKLYGRGWRQIQEHIGTKTAVQIRSHAQKFFSKMA. The H-T-H motif DNA-binding region spans 87-110; that stretch reads WRQIQEHIGTKTAVQIRSHAQKFF. Positions 114-197 are disordered; the sequence is AQEADSRSEG…KQPFKDDSDI (84 aa). Residues 134–144 show a composition bias toward basic residues; that stretch reads RPKRKPAHPYP. Residues 145–158 are compositionally biased toward pro residues; that stretch reads RKSPVPYTQSPPPN. Over residues 167-189 the composition is skewed to polar residues; that stretch reads KSPTSVLSSFGSEDQNNYTTSKQ.

The protein resides in the nucleus. Functionally, probable transcription factor. The protein is Protein REVEILLE 7-like (RVE7L) of Arabidopsis thaliana (Mouse-ear cress).